Here is a 192-residue protein sequence, read N- to C-terminus: ATP-dependent Clp protease proteolytic subunit 1 (192 aa).

The active-site Nucleophile is the Ser-92. His-117 is a catalytic residue.

Belongs to the peptidase S14 family. In terms of assembly, fourteen ClpP subunits assemble into 2 heptameric rings which stack back to back to give a disk-like structure with a central cavity, resembling the structure of eukaryotic proteasomes.

Its subcellular location is the cytoplasm. It carries out the reaction Hydrolysis of proteins to small peptides in the presence of ATP and magnesium. alpha-casein is the usual test substrate. In the absence of ATP, only oligopeptides shorter than five residues are hydrolyzed (such as succinyl-Leu-Tyr-|-NHMec, and Leu-Tyr-Leu-|-Tyr-Trp, in which cleavage of the -Tyr-|-Leu- and -Tyr-|-Trp bonds also occurs).. Its function is as follows. Cleaves peptides in various proteins in a process that requires ATP hydrolysis. Has a chymotrypsin-like activity. Plays a major role in the degradation of misfolded proteins. This Chlamydia abortus (strain DSM 27085 / S26/3) (Chlamydophila abortus) protein is ATP-dependent Clp protease proteolytic subunit 1.